The primary structure comprises 217 residues: Small ribosomal subunit protein uS3 (217 aa).

The region spanning 38–106 is the KH type-2 domain; that stretch reads IRKFINKELA…QVHINIIEIK (69 aa).

Belongs to the universal ribosomal protein uS3 family. Part of the 30S ribosomal subunit. Forms a tight complex with proteins S10 and S14.

Its function is as follows. Binds the lower part of the 30S subunit head. Binds mRNA in the 70S ribosome, positioning it for translation. The chain is Small ribosomal subunit protein uS3 from Streptococcus pyogenes serotype M6 (strain ATCC BAA-946 / MGAS10394).